A 427-amino-acid chain; its full sequence is MGTYTLECAGCRHTIPDNYTLRCECGAGLIRARYTARQISPRDLPGMWRYYDWLPTRGHLDTPGAPVTFKSQGLSKELGLKELYISFNGYWPEMGARMDTCSFKELEAPPTIVRAREHGGRAMVLASVGNTARAFAYLSTLTGFPVVIVVPRKSAHNLWIPGREPGDSIKLITMEEGNDYSDAIRLSERIAGIEGVMPEGGARNVARRDGMGVTMLDAAVTMKRMPDDYFQAIGSGTGGIAAWEAALRLRDDGRFGDRLPKLHLAQNLPFAPMYYAWKAGRRDIIPELDMPEAKKQIEAMYTDILSNRNPPYGVTGGVYDALIDTQGDMYAVTNDEAIRAKRIFEKAEGIDILPPAAVAVAALLQACDRGLEKKRTVLLNITGGGLERLRKEVSMSMVKPCLNVEGPEVPLENITKAIQWQTLSKKS.

At Lys104 the chain carries N6-(pyridoxal phosphate)lysine. Asn130 and Thr382 together coordinate pyridoxal 5'-phosphate.

The protein belongs to the threonine synthase family. Cysteate synthase subfamily. As to quaternary structure, homotrimer. It depends on pyridoxal 5'-phosphate as a cofactor.

The catalysed reaction is O-phospho-L-serine + sulfite + H(+) = L-cysteate + phosphate. Its pathway is cofactor biosynthesis; coenzyme M biosynthesis. Its function is as follows. Specifically catalyzes the beta-elimination of phosphate from L-phosphoserine and the beta-addition of sulfite to the dehydroalanine intermediate to produce L-cysteate. The chain is Cysteate synthase from Methanocella paludicola (strain DSM 17711 / JCM 13418 / NBRC 101707 / SANAE).